A 541-amino-acid chain; its full sequence is NEDD8-activating enzyme E1 regulatory subunit (541 aa).

This sequence belongs to the ubiquitin-activating E1 family. ULA1 subfamily. As to quaternary structure, heterodimer of uba-3 and ula-1. The complex binds NEDD8 and ubc-12.

It functions in the pathway protein modification; protein neddylation. In terms of biological role, regulatory subunit of the dimeric uba-3-ula-1 E1 enzyme. E1 activates NEDD8 by first adenylating its C-terminal glycine residue with ATP, thereafter linking this residue to the side chain of the catalytic cysteine, yielding a NEDD8-rfl-1 (uba-3) thioester and free AMP. E1 finally transfers NEDD8 to the catalytic cysteine of ubc-12. Required for rfl-1 (uba-3) nuclear localization during early embryonic development. This Caenorhabditis elegans protein is NEDD8-activating enzyme E1 regulatory subunit (ula-1).